A 666-amino-acid polypeptide reads, in one-letter code: UvrABC system protein B (666 aa).

Residues 26-183 (DSFQKGAEKV…RKLLHIQYNR (158 aa)) form the Helicase ATP-binding domain. 39-46 (GVTGSGKT) contacts ATP. The Beta-hairpin motif lies at 92-115 (YYDYYQPEAYVPSSDTFIEKDSSI). Residues 429–591 (QIEDLLVEIR…ITPLTIRKEV (163 aa)) enclose the Helicase C-terminal domain. One can recognise a UVR domain in the interval 625 to 660 (EVLKDKLREEMMKAAKELDFERAAILRDKMLSIQIN).

This sequence belongs to the UvrB family. As to quaternary structure, forms a heterotetramer with UvrA during the search for lesions. Interacts with UvrC in an incision complex.

The protein localises to the cytoplasm. Its function is as follows. The UvrABC repair system catalyzes the recognition and processing of DNA lesions. A damage recognition complex composed of 2 UvrA and 2 UvrB subunits scans DNA for abnormalities. Upon binding of the UvrA(2)B(2) complex to a putative damaged site, the DNA wraps around one UvrB monomer. DNA wrap is dependent on ATP binding by UvrB and probably causes local melting of the DNA helix, facilitating insertion of UvrB beta-hairpin between the DNA strands. Then UvrB probes one DNA strand for the presence of a lesion. If a lesion is found the UvrA subunits dissociate and the UvrB-DNA preincision complex is formed. This complex is subsequently bound by UvrC and the second UvrB is released. If no lesion is found, the DNA wraps around the other UvrB subunit that will check the other stand for damage. In Leptospira borgpetersenii serovar Hardjo-bovis (strain JB197), this protein is UvrABC system protein B.